A 175-amino-acid polypeptide reads, in one-letter code: Anterior gradient protein 2 homolog (175 aa).

An N-terminal signal peptide occupies residues 1 to 20 (MEKIPVSAFLLLVALSYTLA). Residues 21–40 (RDTTVKPGAKKDTKDSRPKL) are required to promote cell adhesion. Short sequence motifs (homodimer stabilization; interchain) lie at residues 45-54 (SRGWGDQLIW) and 60-67 (EALYKSKT).

It belongs to the AGR family. As to quaternary structure, monomer and homodimer. Interacts with LYPD3 and DAG1 (alphaDAG1). Interacts with MUC2; disulfide-linked. Expressed strongly in trachea, lung, stomach, colon, prostate and small intestine. Expressed weakly in pituitary gland, salivary gland, mammary gland, bladder, appendix, ovary, fetal lung, uterus, pancreas, kidney, fetal kidney, testis, placenta, thyroid gland and in estrogen receptor (ER)-positive breast cancer cell lines.

The protein localises to the secreted. The protein resides in the endoplasmic reticulum. Its function is as follows. Required for MUC2 post-transcriptional synthesis and secretion. May play a role in the production of mucus by intestinal cells. Proto-oncogene that may play a role in cell migration, cell differentiation and cell growth. Promotes cell adhesion. This chain is Anterior gradient protein 2 homolog (AGR2), found in Homo sapiens (Human).